The primary structure comprises 467 residues: 3-isopropylmalate dehydratase large subunit (467 aa).

Cysteine 347, cysteine 407, and cysteine 410 together coordinate [4Fe-4S] cluster.

This sequence belongs to the aconitase/IPM isomerase family. LeuC type 1 subfamily. As to quaternary structure, heterodimer of LeuC and LeuD. The cofactor is [4Fe-4S] cluster.

The catalysed reaction is (2R,3S)-3-isopropylmalate = (2S)-2-isopropylmalate. It functions in the pathway amino-acid biosynthesis; L-leucine biosynthesis; L-leucine from 3-methyl-2-oxobutanoate: step 2/4. In terms of biological role, catalyzes the isomerization between 2-isopropylmalate and 3-isopropylmalate, via the formation of 2-isopropylmaleate. This chain is 3-isopropylmalate dehydratase large subunit, found in Pelagibacter ubique (strain HTCC1062).